The following is a 213-amino-acid chain: Peptide methionine sulfoxide reductase MsrA (213 aa).

The active site involves Cys53.

Belongs to the MsrA Met sulfoxide reductase family.

The catalysed reaction is L-methionyl-[protein] + [thioredoxin]-disulfide + H2O = L-methionyl-(S)-S-oxide-[protein] + [thioredoxin]-dithiol. The enzyme catalyses [thioredoxin]-disulfide + L-methionine + H2O = L-methionine (S)-S-oxide + [thioredoxin]-dithiol. In terms of biological role, has an important function as a repair enzyme for proteins that have been inactivated by oxidation. Catalyzes the reversible oxidation-reduction of methionine sulfoxide in proteins to methionine. This is Peptide methionine sulfoxide reductase MsrA from Serratia proteamaculans (strain 568).